The following is a 146-amino-acid chain: Prefoldin subunit alpha (146 aa).

It belongs to the prefoldin alpha subunit family. Heterohexamer of two alpha and four beta subunits.

Its subcellular location is the cytoplasm. Functionally, molecular chaperone capable of stabilizing a range of proteins. Seems to fulfill an ATP-independent, HSP70-like function in archaeal de novo protein folding. In Methanobrevibacter smithii (strain ATCC 35061 / DSM 861 / OCM 144 / PS), this protein is Prefoldin subunit alpha.